Here is a 110-residue protein sequence, read N- to C-terminus: Cytochrome c6 (110 aa).

A signal peptide spans 1 to 25 (MKKKLSVLFTVFSFFVIGFAQIAFA). Heme c contacts are provided by Cys-39, Cys-42, His-43, and Met-83.

This sequence belongs to the cytochrome c family. PetJ subfamily. In terms of assembly, monomer. In terms of processing, binds 1 heme c group covalently per subunit.

The protein localises to the plastid. The protein resides in the chloroplast thylakoid lumen. Functions as an electron carrier between membrane-bound cytochrome b6-f and photosystem I in oxygenic photosynthesis. This is Cytochrome c6 (petJ) from Pyropia yezoensis (Susabi-nori).